A 90-amino-acid polypeptide reads, in one-letter code: MKISLVTWLITALCLMEIEEIDGDTPGNYPVDFQGIYYECIVYNRCERDCKIHGASYGYCYAGVCFCEYLPDENKNFWDVMKKQCDYMNN.

Positions Met-1–Gly-23 are cleaved as a signal peptide. An LCN-type CS-alpha/beta domain is found at Pro-26–Asp-86. 3 disulfides stabilise this stretch: Cys-40–Cys-60, Cys-46–Cys-65, and Cys-50–Cys-67.

The protein belongs to the long (3 C-C) scorpion toxin superfamily. Monomer (edited version) and heterodimer (non-edited version) of this alpha chain and a beta chain (AC P0CI43). Expressed by the venom gland.

Its subcellular location is the secreted. In terms of biological role, the edited BmKBTx-like may modulate voltage-gated sodium channels (Nav). The non-edited form is able to form a heterodimer. In orthologs, a heterodimer with LVP beta-chain induces lipolysis in rat adipocytes, which is mediated through the beta-2 adrenergic receptor pathway (ADRB2). Since no LVP beta-chains have been identified in the venom of this scorpion, it is possible that this protein is not involved in a lipolysis process. The protein is Putative sodium channel toxin Ts28 of Tityus serrulatus (Brazilian scorpion).